A 349-amino-acid chain; its full sequence is UPF0283 membrane protein Ent638_2153 (349 aa).

Transmembrane regions (helical) follow at residues 70–90 (MVTA…VQWT), 99–119 (WVAL…VGSV), and 213–233 (ESTL…FIAW).

Belongs to the UPF0283 family.

Its subcellular location is the cell inner membrane. This Enterobacter sp. (strain 638) protein is UPF0283 membrane protein Ent638_2153.